The following is a 255-amino-acid chain: Electron transfer flavoprotein subunit beta (255 aa).

Residue alanine 2 is modified to N-acetylalanine. AMP is bound by residues alanine 9, 39 to 42, cysteine 66, and 123 to 134; these read NPFC and GKQAIDDDCNQT. The segment at 183–205 is recognition loop; sequence ADLRLNEPRYATLPNIMKAKKKK. Lysine 200 bears the N6,N6,N6-trimethyllysine; by ETFBKMT; alternate mark. The residue at position 200 (lysine 200) is an N6-acetyllysine; alternate. N6-methyllysine; alternate is present on lysine 200. Lysine 203 is subject to N6,N6,N6-trimethyllysine; by ETFBKMT. Position 210 is an N6-acetyllysine; alternate (lysine 210). Lysine 210 is modified (N6-succinyllysine; alternate). 2 positions are modified to phosphoserine: serine 223 and serine 226. The residue at position 238 (lysine 238) is an N6-acetyllysine. Lysine 248 is subject to N6-acetyllysine; alternate. Lysine 248 is modified (N6-succinyllysine; alternate).

Belongs to the ETF beta-subunit/FixA family. As to quaternary structure, heterodimer composed of ETFA and ETFB. Identified in a complex that contains ETFA, ETFB and ETFRF1. Interacts with ACADM. Post-translationally, methylated. Trimethylation at Lys-200 and Lys-203 may negatively regulate the activity in electron transfer from acyl-CoA dehydrogenases.

The protein localises to the mitochondrion matrix. Functionally, heterodimeric electron transfer flavoprotein that accepts electrons from several mitochondrial dehydrogenases, including acyl-CoA dehydrogenases, glutaryl-CoA and sarcosine dehydrogenase. It transfers the electrons to the main mitochondrial respiratory chain via ETF-ubiquinone oxidoreductase. Required for normal mitochondrial fatty acid oxidation and normal amino acid metabolism. ETFB binds an AMP molecule that probably has a purely structural role. The chain is Electron transfer flavoprotein subunit beta from Mus musculus (Mouse).